The sequence spans 441 residues: tRNA modification GTPase MnmE (441 aa).

(6S)-5-formyl-5,6,7,8-tetrahydrofolate contacts are provided by R22, E80, and K118. In terms of domain architecture, TrmE-type G spans 213-366 (GIYIAIVGEP…LLNLIKQRVE (154 aa)). GTP contacts are provided by residues 223-228 (NSGKST), 242-248 (SEYAGTT), and 267-270 (DTAG). Residues S227 and T248 each contribute to the Mg(2+) site. K441 is a binding site for (6S)-5-formyl-5,6,7,8-tetrahydrofolate.

The protein belongs to the TRAFAC class TrmE-Era-EngA-EngB-Septin-like GTPase superfamily. TrmE GTPase family. In terms of assembly, homodimer. Heterotetramer of two MnmE and two MnmG subunits. It depends on K(+) as a cofactor.

It localises to the cytoplasm. Exhibits a very high intrinsic GTPase hydrolysis rate. Involved in the addition of a carboxymethylaminomethyl (cmnm) group at the wobble position (U34) of certain tRNAs, forming tRNA-cmnm(5)s(2)U34. This chain is tRNA modification GTPase MnmE, found in Ehrlichia canis (strain Jake).